Consider the following 361-residue polypeptide: Riboflavin biosynthesis protein RibD (361 aa).

Residues 1-122 (MEEYYMKLAL…MMKEAGIEVR (122 aa)) enclose the CMP/dCMP-type deaminase domain. Residues 1 to 144 (MEEYYMKLAL…EKFLHFMRTG (144 aa)) are deaminase. Residue H49 coordinates Zn(2+). The active-site Proton donor is E51. 2 residues coordinate Zn(2+): C74 and C83. The reductase stretch occupies residues 145–361 (LPYVTLKAAA…IKLTAKPTKE (217 aa)). Residue A153 coordinates NADP(+). Residue S167 coordinates substrate. W169 lines the NADP(+) pocket. R183 provides a ligand contact to substrate. NADP(+) contacts are provided by T195 and D199. Substrate is bound by residues L203 and R206. Residue T221 participates in NADP(+) binding. Substrate is bound at residue E290. 292-298 (GSAVHGS) is an NADP(+) binding site.

This sequence in the N-terminal section; belongs to the cytidine and deoxycytidylate deaminase family. The protein in the C-terminal section; belongs to the HTP reductase family. Homotetramer. Zn(2+) is required as a cofactor.

The enzyme catalyses 2,5-diamino-6-hydroxy-4-(5-phosphoribosylamino)-pyrimidine + H2O + H(+) = 5-amino-6-(5-phospho-D-ribosylamino)uracil + NH4(+). It carries out the reaction 5-amino-6-(5-phospho-D-ribitylamino)uracil + NADP(+) = 5-amino-6-(5-phospho-D-ribosylamino)uracil + NADPH + H(+). Its pathway is cofactor biosynthesis; riboflavin biosynthesis; 5-amino-6-(D-ribitylamino)uracil from GTP: step 2/4. It participates in cofactor biosynthesis; riboflavin biosynthesis; 5-amino-6-(D-ribitylamino)uracil from GTP: step 3/4. Converts 2,5-diamino-6-(ribosylamino)-4(3h)-pyrimidinone 5'-phosphate into 5-amino-6-(ribosylamino)-2,4(1h,3h)-pyrimidinedione 5'-phosphate. This Bacillus subtilis (strain 168) protein is Riboflavin biosynthesis protein RibD (ribD).